A 413-amino-acid chain; its full sequence is MRAAILSIGDELLLGEVVDTNASTIAARLYNLGVNLPLQMTVGDNIQDIVEACQLLAGKSDTVIVTGGLGPTVDDVTALAAAKLAGSPLEPNREALAHLKDFAERVAEKLHPANDKQSLMPASAKVIPNLVGTACGFSLVHDGCRFFFLPGVPGEMVSMLDETVLPALASSGRHKILRSKVFKVSGISEAELDAMLQGVTEGFAAASIAFCVNFPEIEVKIRVVADEKLTADKIIAIVGDKTRNILGSRVFAEDGETIDTVVAGLFKKTGATLSLAESCTGGLIAKRITDLSGSSAYFLEGLVTYSNRAKIDLLGVPAQLLEEKGAVSAEVAMAMARGAREKSGSDLALAVTGIAGPEGGSAEKPVGTVFMALAGQEQCRVRLFNFHGDREQVRLVTSFAALNWLRRELLARP.

The protein belongs to the CinA family.

The protein is CinA-like protein of Geotalea daltonii (strain DSM 22248 / JCM 15807 / FRC-32) (Geobacter daltonii).